The following is a 307-amino-acid chain: Mycothiol acetyltransferase (307 aa).

2 N-acetyltransferase domains span residues 12–152 (TRTD…APIP) and 160–307 (VTLR…YQRS). E43 contacts 1D-myo-inositol 2-(L-cysteinylamino)-2-deoxy-alpha-D-glucopyranoside. 87 to 89 (LAV) lines the acetyl-CoA pocket. 1D-myo-inositol 2-(L-cysteinylamino)-2-deoxy-alpha-D-glucopyranoside contacts are provided by E187, K227, and E239. Residues 243–245 (LGV) and 250–256 (HGGGLGK) contribute to the acetyl-CoA site. 1D-myo-inositol 2-(L-cysteinylamino)-2-deoxy-alpha-D-glucopyranoside is bound at residue Y278.

This sequence belongs to the acetyltransferase family. MshD subfamily. As to quaternary structure, monomer.

The catalysed reaction is 1D-myo-inositol 2-(L-cysteinylamino)-2-deoxy-alpha-D-glucopyranoside + acetyl-CoA = mycothiol + CoA + H(+). In terms of biological role, catalyzes the transfer of acetyl from acetyl-CoA to desacetylmycothiol (Cys-GlcN-Ins) to form mycothiol. The chain is Mycothiol acetyltransferase from Salinispora arenicola (strain CNS-205).